A 217-amino-acid polypeptide reads, in one-letter code: Probable transaldolase (217 aa).

Catalysis depends on Lys83, which acts as the Schiff-base intermediate with substrate.

The protein belongs to the transaldolase family. Type 3B subfamily.

It localises to the cytoplasm. The enzyme catalyses D-sedoheptulose 7-phosphate + D-glyceraldehyde 3-phosphate = D-erythrose 4-phosphate + beta-D-fructose 6-phosphate. Its pathway is carbohydrate degradation; pentose phosphate pathway; D-glyceraldehyde 3-phosphate and beta-D-fructose 6-phosphate from D-ribose 5-phosphate and D-xylulose 5-phosphate (non-oxidative stage): step 2/3. Functionally, transaldolase is important for the balance of metabolites in the pentose-phosphate pathway. The chain is Probable transaldolase from Hydrogenobaculum sp. (strain Y04AAS1).